We begin with the raw amino-acid sequence, 87 residues long: uncharacterized protein (87 aa).

Residues 48-70 traverse the membrane as a helical segment; that stretch reads GIYIPHTLIFWMCPRAMGTAITF.

The protein resides in the host membrane. This is an uncharacterized protein from Gallid herpesvirus 2 (strain Chicken/Md5/ATCC VR-987) (GaHV-2).